A 306-amino-acid polypeptide reads, in one-letter code: Ribokinase (306 aa).

Residues 12 to 14 (NAD), 40 to 44 (GKGAN), and Glu141 contribute to the substrate site. Residues Asn185 and 221–226 (TLGAKG) contribute to the ATP site. K(+) is bound by residues Asp247 and Thr249. ATP is bound at residue 252 to 253 (GD). Asp253 lines the substrate pocket. The active-site Proton acceptor is the Asp253. Residues Ser283, Lys286, Gly288, and Ser292 each contribute to the K(+) site.

This sequence belongs to the carbohydrate kinase PfkB family. Ribokinase subfamily. In terms of assembly, homodimer. Requires Mg(2+) as cofactor.

It localises to the cytoplasm. The enzyme catalyses D-ribose + ATP = D-ribose 5-phosphate + ADP + H(+). Its pathway is carbohydrate metabolism; D-ribose degradation; D-ribose 5-phosphate from beta-D-ribopyranose: step 2/2. Activated by a monovalent cation that binds near, but not in, the active site. The most likely occupant of the site in vivo is potassium. Ion binding induces a conformational change that may alter substrate affinity. Its function is as follows. Catalyzes the phosphorylation of ribose at O-5 in a reaction requiring ATP and magnesium. The resulting D-ribose-5-phosphate can then be used either for sythesis of nucleotides, histidine, and tryptophan, or as a component of the pentose phosphate pathway. This chain is Ribokinase, found in Haemophilus influenzae (strain ATCC 51907 / DSM 11121 / KW20 / Rd).